We begin with the raw amino-acid sequence, 65 residues long: Small ribosomal subunit protein eS27 (65 aa).

Zn(2+) contacts are provided by cysteine 20, cysteine 23, cysteine 39, and cysteine 42. The segment at 20–42 (CIDCGNEQIVFSHPATKVRCLVC) adopts a C4-type zinc-finger fold.

The protein belongs to the eukaryotic ribosomal protein eS27 family. Part of the 30S ribosomal subunit. Requires Zn(2+) as cofactor.

The polypeptide is Small ribosomal subunit protein eS27 (Thermococcus gammatolerans (strain DSM 15229 / JCM 11827 / EJ3)).